We begin with the raw amino-acid sequence, 154 residues long: Superoxide dismutase [Cu-Zn] (154 aa).

The Cu cation site is built by His-45, His-47, and His-62. A disulfide bridge connects residues Cys-56 and Cys-146. His-62, His-70, His-79, and Asp-82 together coordinate Zn(2+). His-120 lines the Cu cation pocket.

It belongs to the Cu-Zn superoxide dismutase family. Homodimer. The cofactor is Cu cation. Requires Zn(2+) as cofactor.

It localises to the cytoplasm. It catalyses the reaction 2 superoxide + 2 H(+) = H2O2 + O2. Destroys radicals which are normally produced within the cells and which are toxic to biological systems. In Bombyx mori (Silk moth), this protein is Superoxide dismutase [Cu-Zn].